The following is a 34-amino-acid chain: Omega/M-ectatotoxin-Et1a subunit B (34 aa).

A disulfide bridge links C10 with C32.

Belongs to the ectatomin family. Ectatomin-Et subfamily. Heterodimer of an A and a B chain; disulfide-linked. As to expression, expressed by the venom gland.

It localises to the secreted. It is found in the target cell membrane. Functionally, algogenic for animals, human and insects. At high concentrations (0.5-1 uM), it acts as a pore-forming protein that forms nonselective cation channels both in cell and artificial membranes. It is weakly selective for cation over anions channel conductance is identical in both directions. At lower concentrations (1-10 nM), this heterodimer inhibits cardiac L-type calcium currents in isolated rat cardiac ventricular myocytes. The protein is Omega/M-ectatotoxin-Et1a subunit B of Ectatomma tuberculatum (Selva ant).